The sequence spans 447 residues: Argininosuccinate synthase (447 aa).

ATP contacts are provided by residues 20-28 and A46; that span reads AFSGGLDTS. Y102 is a binding site for L-citrulline. Positions 132 and 134 each coordinate ATP. 3 residues coordinate L-aspartate: T134, N138, and D139. Residue N138 coordinates L-citrulline. D139 serves as a coordination point for ATP. L-citrulline-binding residues include R142 and S195. D197 contributes to the ATP binding site. Residues T204, E206, and E283 each contribute to the L-citrulline site.

The protein belongs to the argininosuccinate synthase family. Type 2 subfamily. As to quaternary structure, homotetramer.

The protein localises to the cytoplasm. The catalysed reaction is L-citrulline + L-aspartate + ATP = 2-(N(omega)-L-arginino)succinate + AMP + diphosphate + H(+). It functions in the pathway amino-acid biosynthesis; L-arginine biosynthesis; L-arginine from L-ornithine and carbamoyl phosphate: step 2/3. The chain is Argininosuccinate synthase from Neisseria meningitidis serogroup C / serotype 2a (strain ATCC 700532 / DSM 15464 / FAM18).